The sequence spans 256 residues: Glycerol-3-phosphate acyltransferase (256 aa).

6 consecutive transmembrane segments (helical) span residues 2 to 22, 58 to 78, 90 to 110, 123 to 143, 153 to 173, and 211 to 231; these read FPYL…SVLW, LAVA…AIGL, SYFI…WFKF, LIVV…IFAF, IIGT…GVMG, and FADG…ILVV.

This sequence belongs to the PlsY family. Probably interacts with PlsX.

The protein resides in the cell membrane. The catalysed reaction is an acyl phosphate + sn-glycerol 3-phosphate = a 1-acyl-sn-glycero-3-phosphate + phosphate. Its pathway is lipid metabolism; phospholipid metabolism. Functionally, catalyzes the transfer of an acyl group from acyl-phosphate (acyl-PO(4)) to glycerol-3-phosphate (G3P) to form lysophosphatidic acid (LPA). This enzyme utilizes acyl-phosphate as fatty acyl donor, but not acyl-CoA or acyl-ACP. The protein is Glycerol-3-phosphate acyltransferase of Mesoplasma florum (strain ATCC 33453 / NBRC 100688 / NCTC 11704 / L1) (Acholeplasma florum).